The primary structure comprises 234 residues: Large ribosomal subunit protein uL1 (234 aa).

It belongs to the universal ribosomal protein uL1 family. In terms of assembly, part of the 50S ribosomal subunit.

Binds directly to 23S rRNA. The L1 stalk is quite mobile in the ribosome, and is involved in E site tRNA release. Its function is as follows. Protein L1 is also a translational repressor protein, it controls the translation of the L11 operon by binding to its mRNA. The protein is Large ribosomal subunit protein uL1 of Prochlorococcus marinus (strain MIT 9211).